A 294-amino-acid chain; its full sequence is PAK4-inhibitor INKA2 (294 aa).

Disordered regions lie at residues 50 to 143, 170 to 198, and 223 to 290; these read ISGG…STLM, PELE…RELG, and LKEK…DINT. Over residues 85 to 99 the composition is skewed to polar residues; it reads SPSNQASLGSTSSGK. The inka box stretch occupies residues 134-177; sequence EPDDWTSTLMSRGRNRQPLVLGDNVFADLVGNWLDLPELEKGGE. Over residues 171–198 the composition is skewed to basic and acidic residues; sequence ELEKGGEKGETGEAGEPKGGRGQPRELG. Basic residues predominate over residues 241 to 253; that stretch reads RSQKVKKRSHSKG.

The protein belongs to the INKA family. In terms of assembly, interacts with PAK4.

It is found in the nucleus. Its function is as follows. Inhibitor of the serine/threonine-protein kinase PAK4. Acts by binding PAK4 in a substrate-like manner, inhibiting the protein kinase activity. This chain is PAK4-inhibitor INKA2, found in Bos taurus (Bovine).